A 182-amino-acid chain; its full sequence is NAD(P)H-quinone oxidoreductase subunit I, chloroplastic (182 aa).

2 4Fe-4S ferredoxin-type domains span residues 55–84 and 95–124; these read GRIHFEFDKCIACEVCVRVCPIDLPVVDWK and LNYSIDFGICIFCGNCVEYCPTNCLSMTEE. [4Fe-4S] cluster is bound by residues cysteine 64, cysteine 67, cysteine 70, cysteine 74, cysteine 104, cysteine 107, cysteine 110, and cysteine 114.

The protein belongs to the complex I 23 kDa subunit family. As to quaternary structure, NDH is composed of at least 16 different subunits, 5 of which are encoded in the nucleus. The cofactor is [4Fe-4S] cluster.

It localises to the plastid. The protein resides in the chloroplast thylakoid membrane. It carries out the reaction a plastoquinone + NADH + (n+1) H(+)(in) = a plastoquinol + NAD(+) + n H(+)(out). The enzyme catalyses a plastoquinone + NADPH + (n+1) H(+)(in) = a plastoquinol + NADP(+) + n H(+)(out). NDH shuttles electrons from NAD(P)H:plastoquinone, via FMN and iron-sulfur (Fe-S) centers, to quinones in the photosynthetic chain and possibly in a chloroplast respiratory chain. The immediate electron acceptor for the enzyme in this species is believed to be plastoquinone. Couples the redox reaction to proton translocation, and thus conserves the redox energy in a proton gradient. This chain is NAD(P)H-quinone oxidoreductase subunit I, chloroplastic, found in Buxus microphylla (Littleleaf boxwood).